The following is a 25-amino-acid chain: Metallothionein (25 aa).

Residues Cys3, Cys5, Cys11, Cys13, Cys18, Cys20, and Cys23 each contribute to the Cu(+) site.

It belongs to the metallothionein superfamily. Type 8 family.

Its function is as follows. The metallothioneins are involved in the cellular sequestration of toxic metal ions. Binds six copper (cuprous) ions. This Agaricus bisporus (White button mushroom) protein is Metallothionein.